The chain runs to 136 residues: Small ribosomal subunit protein uS8c (136 aa).

This sequence belongs to the universal ribosomal protein uS8 family. In terms of assembly, part of the 30S ribosomal subunit.

Its subcellular location is the plastid. The protein resides in the chloroplast. Functionally, one of the primary rRNA binding proteins, it binds directly to 16S rRNA central domain where it helps coordinate assembly of the platform of the 30S subunit. This is Small ribosomal subunit protein uS8c (rps8) from Saccharum hybrid (Sugarcane).